The sequence spans 200 residues: MARFTGSTWKKSRRLGISLSGTGKELERRPYAPGQHGPNQRKKLSEYGLQLQEKQKLRYMYGINERQFRTIFDRAGKMKGIHGANFMALLASRLDAVVYQLGLARTRRQARQLVNHGHIMVDGARVDIPSYQLKPGQVISVREKSQKLNIIAESVELSNHVPEYLTFDADKLEGTFVRVPERSELSAEINEQLIVEYYSR.

The S4 RNA-binding domain occupies 92-155 (SRLDAVVYQL…QKLNIIAESV (64 aa)).

Belongs to the universal ribosomal protein uS4 family. Part of the 30S ribosomal subunit. Contacts protein S5. The interaction surface between S4 and S5 is involved in control of translational fidelity.

One of the primary rRNA binding proteins, it binds directly to 16S rRNA where it nucleates assembly of the body of the 30S subunit. In terms of biological role, with S5 and S12 plays an important role in translational accuracy. This chain is Small ribosomal subunit protein uS4, found in Macrococcus caseolyticus (strain JCSC5402) (Macrococcoides caseolyticum).